The following is a 396-amino-acid chain: MIISAASDYRAAAQRILPPFLFHYMDGGAYSEYTLRRNVEDLSEVALRQRILKNMSDLSLETTLFNEKLSMPVALGPVGLCGMYARRGEVQAAKAADAHGIPFTLSTVSVCPIEEVAPAIKRPMWFQLYVLRDRGFMRNALERAKAAGCSTLVFTVDMPTPGARYRDAHSGMSGPNAAMRRYLQAVTHPQWAWDVGLNGRPHDLGNISAYLGKPTGLEDYIGWLANNFDPSISWKDLEWIRDFWDGPMVIKGILDPEDARDAVRFGADGIVVSNHGGRQLDGVLSSARALPAIADAVKGDIAILADSGIRNGLDVVRMIALGADTVLLGRAFLYALATAGQAGVANLLNLIEKEMKVAMTLTGAKSISEITQDSLVQVLGKELPAALAPMAKGNAA.

The 380-residue stretch at 1 to 380 (MIISAASDYR…TQDSLVQVLG (380 aa)) folds into the FMN hydroxy acid dehydrogenase domain. Substrate is bound at residue tyrosine 24. FMN is bound by residues serine 106 and glutamine 127. Tyrosine 129 contacts substrate. Threonine 155 serves as a coordination point for FMN. Substrate is bound at residue arginine 164. Lysine 251 contacts FMN. The active-site Proton acceptor is histidine 275. A substrate-binding site is contributed by arginine 278. 306 to 330 (DSGIRNGLDVVRMIALGADTVLLGR) lines the FMN pocket.

The protein belongs to the FMN-dependent alpha-hydroxy acid dehydrogenase family. It depends on FMN as a cofactor.

It localises to the cell inner membrane. The enzyme catalyses (S)-lactate + A = pyruvate + AH2. In terms of biological role, catalyzes the conversion of L-lactate to pyruvate. Is coupled to the respiratory chain. This Escherichia coli O45:K1 (strain S88 / ExPEC) protein is L-lactate dehydrogenase.